The following is a 384-amino-acid chain: BarH-like 2 homeobox protein (384 aa).

Disordered regions lie at residues 1–134, 154–235, and 364–384; these read MTAM…APRT, CAPY…ARTA, and PGGQPALNPLSNPIPGTPHPR. Composition is skewed to low complexity over residues 101–110 and 119–134; these read VPAQSLQPSP and QSAAQQLGSAAAAPRT. Positions 157-175 are enriched in polar residues; sequence YSTSVSSPHHTPKQESNAA. Over residues 177 to 217 the composition is skewed to basic and acidic residues; sequence ESFRPKLEQEDGKTKLDKREDPQSDIKCHGTKEEGDREITS. A DNA-binding region (homeobox) is located at residues 229–288; it reads PRKARTAFSDHQLNQLERSFERQKYLSVQDRMDLAAALNLTDTQVKTWYQNRRTKWKRQT.

The protein belongs to the BAR homeobox family.

The protein localises to the nucleus. Its function is as follows. Potential regulator of neural basic helix-loop-helix genes. It may down-regulate expression of ASCL1 and, within the thalamus, up-regulate NGN2, thereby regulating distinct patterns of neuronal differentiation. The sequence is that of BarH-like 2 homeobox protein (Barhl2) from Mus musculus (Mouse).